Consider the following 518-residue polypeptide: Endoglucanase 18 (518 aa).

Residues 1–35 (MANCVRCCCWLLVLMLMALAITAAVVFVRYKNGEG) are Cytoplasmic-facing. Residues 36-56 (VFPFPGVPGAVDHKYADALAV) form a helical membrane-spanning segment. Over 57 to 518 (ALQFFQVQKS…STSSLARSLS (462 aa)) the chain is Extracellular. An N-linked (GlcNAc...) asparagine glycan is attached at N71. Residue D101 is the Nucleophile of the active site. N214, N251, and N272 each carry an N-linked (GlcNAc...) asparagine glycan. H436 is a catalytic residue. N-linked (GlcNAc...) asparagine glycosylation occurs at N477. Residues D482 and E491 contribute to the active site.

The protein belongs to the glycosyl hydrolase 9 (cellulase E) family.

It is found in the membrane. The catalysed reaction is Endohydrolysis of (1-&gt;4)-beta-D-glucosidic linkages in cellulose, lichenin and cereal beta-D-glucans.. The sequence is that of Endoglucanase 18 from Oryza sativa subsp. japonica (Rice).